A 591-amino-acid polypeptide reads, in one-letter code: Serine/threonine-protein kinase PAK 4 (591 aa).

The CRIB domain maps to 11–24; sequence ISAPSNFEHRVHTG. A linker region spans residues 25–320; it reads FDQHEQKFTG…VVDPGDPRSY (296 aa). At Ser-41 the chain carries Phosphoserine. Lys-78 is subject to N6-methyllysine. A disordered region spans residues 95 to 301; the sequence is TRSNSLRRDS…PQREPQRVSH (207 aa). Residues Ser-104 and Ser-148 each carry the phosphoserine modification. Basic and acidic residues predominate over residues 149–164; that stretch reads GDRRRAGPEKRPKSSR. 2 positions are modified to phosphoserine: Ser-167 and Ser-181. Thr-187 carries the post-translational modification Phosphothreonine. Residues 191–202 show a composition bias toward low complexity; the sequence is AGLASGAKLAAG. Position 195 is a phosphoserine (Ser-195). Thr-207 is subject to Phosphothreonine. Positions 242 to 260 are enriched in low complexity; sequence SSSSSSRPPTRARGAPSPG. Phosphoserine is present on residues Ser-258 and Ser-267. A compositionally biased stretch (pro residues) spans 271–290; it reads LAPPACTPAAPAVPGPPGPR. Position 291 is a phosphoserine (Ser-291). Basic and acidic residues predominate over residues 292–301; sequence PQREPQRVSH. The GEF-interaction domain (GID) stretch occupies residues 298–323; sequence RVSHEQFRAALQLVVDPGDPRSYLDN. Residues 321 to 572 form the Protein kinase domain; that stretch reads LDNFIKIGEG…AAELLKHPFL (252 aa). Residues 327 to 335, Lys-350, and 396 to 398 contribute to the ATP site; these read IGEGSTGIV and EFL. Asp-440 functions as the Proton acceptor in the catalytic mechanism. 458–460 contacts ATP; sequence DFG. The residue at position 474 (Ser-474) is a Phosphoserine; by autocatalysis.

This sequence belongs to the protein kinase superfamily. STE Ser/Thr protein kinase family. STE20 subfamily. In terms of assembly, interacts with FGFR2 and GRB2. Interacts tightly with GTP-bound but not GDP-bound CDC42/p21 and weakly with RAC1. Interacts with INKA1. Interacts with SH3RF2. Interacts with RHOU and PAXI; the PAK4-RHOU complex protects RHOU from ubiquitination and acts as a scaffold to suppport paxillin/PAXI phosphorylation. In terms of processing, autophosphorylated on serine residues when activated by CDC42/p21. Phosphorylated on tyrosine residues upon stimulation of FGFR2. Methylated by SETD6. Post-translationally, polyubiquitinated, leading to its proteasomal degradation. Highest expression in prostate, testis and colon.

It is found in the cytoplasm. It catalyses the reaction L-seryl-[protein] + ATP = O-phospho-L-seryl-[protein] + ADP + H(+). It carries out the reaction L-threonyl-[protein] + ATP = O-phospho-L-threonyl-[protein] + ADP + H(+). Its activity is regulated as follows. Inhibited by INKA1; which inhibits the serine/threonine-protein kinase activity by binding PAK4 in a substrate-like manner. Functionally, serine/threonine-protein kinase that plays a role in a variety of different signaling pathways including cytoskeleton regulation, cell adhesion turnover, cell migration, growth, proliferation or cell survival. Activation by various effectors including growth factor receptors or active CDC42 and RAC1 results in a conformational change and a subsequent autophosphorylation on several serine and/or threonine residues. Phosphorylates and inactivates the protein phosphatase SSH1, leading to increased inhibitory phosphorylation of the actin binding/depolymerizing factor cofilin. Decreased cofilin activity may lead to stabilization of actin filaments. Phosphorylates LIMK1, a kinase that also inhibits the activity of cofilin. Phosphorylates integrin beta5/ITGB5 and thus regulates cell motility. Phosphorylates ARHGEF2 and activates the downstream target RHOA that plays a role in the regulation of assembly of focal adhesions and actin stress fibers. Stimulates cell survival by phosphorylating the BCL2 antagonist of cell death BAD. Alternatively, inhibits apoptosis by preventing caspase-8 binding to death domain receptors in a kinase independent manner. Plays a role in cell-cycle progression by controlling levels of the cell-cycle regulatory protein CDKN1A and by phosphorylating RAN. Promotes kinase-independent stabilization of RHOU, thereby contributing to focal adhesion disassembly during cell migration. The chain is Serine/threonine-protein kinase PAK 4 from Homo sapiens (Human).